The following is a 116-amino-acid chain: Putative pterin-4-alpha-carbinolamine dehydratase (116 aa).

Belongs to the pterin-4-alpha-carbinolamine dehydratase family.

It catalyses the reaction (4aS,6R)-4a-hydroxy-L-erythro-5,6,7,8-tetrahydrobiopterin = (6R)-L-erythro-6,7-dihydrobiopterin + H2O. The polypeptide is Putative pterin-4-alpha-carbinolamine dehydratase (Xylella fastidiosa (strain 9a5c)).